We begin with the raw amino-acid sequence, 198 residues long: MLRLLFGFLVTCFLLLPARAAEPQYAIFAGGCFWCVESDFDAVPGVLETISGYAGGKSANPTYEDYAKGGHREVVRVKFDPDRVSYAELVGVLFRTTDPTDGDGQFCDRGFAYTTAIHALNERQAMDAKAEKIKAEAELGRPIVTPVEGAAKFWPAEDYHQDFGKRNPIRYWYYRNGCGRNRTVEKLWGDRAYAGVSH.

Residue Cys32 is part of the active site.

Belongs to the MsrA Met sulfoxide reductase family.

It catalyses the reaction L-methionyl-[protein] + [thioredoxin]-disulfide + H2O = L-methionyl-(S)-S-oxide-[protein] + [thioredoxin]-dithiol. It carries out the reaction [thioredoxin]-disulfide + L-methionine + H2O = L-methionine (S)-S-oxide + [thioredoxin]-dithiol. Its function is as follows. Has an important function as a repair enzyme for proteins that have been inactivated by oxidation. Catalyzes the reversible oxidation-reduction of methionine sulfoxide in proteins to methionine. This Rhizobium meliloti (strain 1021) (Ensifer meliloti) protein is Peptide methionine sulfoxide reductase MsrA 2 (msrA2).